The primary structure comprises 496 residues: NADP-dependent glyceraldehyde-3-phosphate dehydrogenase (496 aa).

Substrate contacts are provided by residues arginine 116 and 169-170; that span reads NY. NADP(+) contacts are provided by lysine 192, threonine 195, and aspartate 230. Residue 245–249 participates in NAD(+) binding; sequence GGDTG. The active-site Proton acceptor is the glutamate 264. 297-299 lines the substrate pocket; that stretch reads RCT. Residue cysteine 298 is the Nucleophile of the active site. Glutamate 391 serves as a coordination point for NADP(+). Arginine 451 is a substrate binding site.

Belongs to the aldehyde dehydrogenase family.

The protein localises to the cytoplasm. The enzyme catalyses D-glyceraldehyde 3-phosphate + NADP(+) + H2O = (2R)-3-phosphoglycerate + NADPH + 2 H(+). Its function is as follows. Important as a means of generating NADPH for biosynthetic reactions. The sequence is that of NADP-dependent glyceraldehyde-3-phosphate dehydrogenase (GAPN) from Pisum sativum (Garden pea).